Reading from the N-terminus, the 274-residue chain is Diaminopimelate epimerase (274 aa).

3 residues coordinate substrate: N11, Q44, and N64. C73 serves as the catalytic Proton donor. Residues 74-75, N157, N190, and 208-209 contribute to the substrate site; these read GN and ER. C217 (proton acceptor) is an active-site residue. 218–219 contributes to the substrate binding site; the sequence is GS.

This sequence belongs to the diaminopimelate epimerase family. In terms of assembly, homodimer.

The protein resides in the cytoplasm. It carries out the reaction (2S,6S)-2,6-diaminopimelate = meso-2,6-diaminopimelate. Its pathway is amino-acid biosynthesis; L-lysine biosynthesis via DAP pathway; DL-2,6-diaminopimelate from LL-2,6-diaminopimelate: step 1/1. In terms of biological role, catalyzes the stereoinversion of LL-2,6-diaminopimelate (L,L-DAP) to meso-diaminopimelate (meso-DAP), a precursor of L-lysine and an essential component of the bacterial peptidoglycan. The sequence is that of Diaminopimelate epimerase from Mannheimia succiniciproducens (strain KCTC 0769BP / MBEL55E).